Consider the following 1610-residue polypeptide: Adenylate cyclase type 10 (1610 aa).

Guanylate cyclase domains lie at 42 to 179 and 293 to 418; these read VLMF…RLAQ and TIVF…ARMM. Mg(2+)-binding residues include Asp47 and Ile48. 47-52 provides a ligand contact to ATP; it reads DISGFT. Lys95 contributes to the hydrogencarbonate binding site. Mg(2+) is bound at residue Asp99. Residues Asp99 and Lys144 each coordinate ATP. The hydrogencarbonate site is built by Val167, Arg176, and Met337. Residues Val406 and 412 to 416 contribute to the ATP site; that span reads NIAAR.

Belongs to the adenylyl cyclase class-4/guanylyl cyclase family. It depends on Mg(2+) as a cofactor. Requires Mn(2+) as cofactor.

It localises to the cell membrane. The protein localises to the cytoplasm. It is found in the cytoskeleton. Its subcellular location is the perinuclear region. The protein resides in the nucleus. It localises to the cell projection. The protein localises to the cilium. The enzyme catalyses ATP = 3',5'-cyclic AMP + diphosphate. With respect to regulation, activated by manganese or magnesium ions. In the presence of magnesium ions, the enzyme is activated by bicarbonate. Calcium mildly increases the enzyme activity, also in the presence of magnesium ions. Functionally, catalyzes the formation of the signaling molecule cAMP. May function as sensor that mediates responses to changes in cellular bicarbonate and CO(2) levels. Has a critical role in mammalian spermatogenesis by producing the cAMP which regulates cAMP-responsive nuclear factors indispensable for sperm maturation in the epididymis. Induces capacitation, the maturational process that sperm undergo prior to fertilization. Involved in ciliary beat regulation. The protein is Adenylate cyclase type 10 (ADCY10) of Oryctolagus cuniculus (Rabbit).